Consider the following 128-residue polypeptide: MSAWLDEIRWTADGLVPVVAQEAGTGQVLMVAWMNREALALTAAEGYAVYWSRSRGRLWRKGEESGHRQKVLEIRIDCDEDVVLLKVEQAGGIACHTGRHHCFYRVLQDGRWVTVEPVLKPPDSIYGA.

Aspartate 77 contacts Mg(2+). Cysteine 78 is a Zn(2+) binding site. Residues aspartate 79 and aspartate 81 each contribute to the Mg(2+) site. Residues cysteine 95 and cysteine 102 each contribute to the Zn(2+) site.

This sequence belongs to the PRA-CH family. Homodimer. Mg(2+) is required as a cofactor. Requires Zn(2+) as cofactor.

The protein resides in the cytoplasm. It carries out the reaction 1-(5-phospho-beta-D-ribosyl)-5'-AMP + H2O = 1-(5-phospho-beta-D-ribosyl)-5-[(5-phospho-beta-D-ribosylamino)methylideneamino]imidazole-4-carboxamide. It participates in amino-acid biosynthesis; L-histidine biosynthesis; L-histidine from 5-phospho-alpha-D-ribose 1-diphosphate: step 3/9. Functionally, catalyzes the hydrolysis of the adenine ring of phosphoribosyl-AMP. This chain is Phosphoribosyl-AMP cyclohydrolase, found in Methylococcus capsulatus (strain ATCC 33009 / NCIMB 11132 / Bath).